The following is a 288-amino-acid chain: 4-hydroxy-3-methylbut-2-enyl diphosphate reductase (288 aa).

Position 12 (Cys-12) interacts with [4Fe-4S] cluster. Positions 42 and 77 each coordinate (2E)-4-hydroxy-3-methylbut-2-enyl diphosphate. Residues His-42 and His-77 each contribute to the dimethylallyl diphosphate site. Isopentenyl diphosphate contacts are provided by His-42 and His-77. Cys-99 contributes to the [4Fe-4S] cluster binding site. His-127 is a (2E)-4-hydroxy-3-methylbut-2-enyl diphosphate binding site. Position 127 (His-127) interacts with dimethylallyl diphosphate. His-127 provides a ligand contact to isopentenyl diphosphate. Glu-129 functions as the Proton donor in the catalytic mechanism. Thr-165 serves as a coordination point for (2E)-4-hydroxy-3-methylbut-2-enyl diphosphate. Cys-193 contributes to the [4Fe-4S] cluster binding site. 4 residues coordinate (2E)-4-hydroxy-3-methylbut-2-enyl diphosphate: Ser-221, Ser-222, Asn-223, and Ser-265. Dimethylallyl diphosphate-binding residues include Ser-221, Ser-222, Asn-223, and Ser-265. 4 residues coordinate isopentenyl diphosphate: Ser-221, Ser-222, Asn-223, and Ser-265.

Belongs to the IspH family. [4Fe-4S] cluster is required as a cofactor.

The catalysed reaction is isopentenyl diphosphate + 2 oxidized [2Fe-2S]-[ferredoxin] + H2O = (2E)-4-hydroxy-3-methylbut-2-enyl diphosphate + 2 reduced [2Fe-2S]-[ferredoxin] + 2 H(+). It catalyses the reaction dimethylallyl diphosphate + 2 oxidized [2Fe-2S]-[ferredoxin] + H2O = (2E)-4-hydroxy-3-methylbut-2-enyl diphosphate + 2 reduced [2Fe-2S]-[ferredoxin] + 2 H(+). The protein operates within isoprenoid biosynthesis; dimethylallyl diphosphate biosynthesis; dimethylallyl diphosphate from (2E)-4-hydroxy-3-methylbutenyl diphosphate: step 1/1. It functions in the pathway isoprenoid biosynthesis; isopentenyl diphosphate biosynthesis via DXP pathway; isopentenyl diphosphate from 1-deoxy-D-xylulose 5-phosphate: step 6/6. Catalyzes the conversion of 1-hydroxy-2-methyl-2-(E)-butenyl 4-diphosphate (HMBPP) into a mixture of isopentenyl diphosphate (IPP) and dimethylallyl diphosphate (DMAPP). Acts in the terminal step of the DOXP/MEP pathway for isoprenoid precursor biosynthesis. The protein is 4-hydroxy-3-methylbut-2-enyl diphosphate reductase of Caldanaerobacter subterraneus subsp. tengcongensis (strain DSM 15242 / JCM 11007 / NBRC 100824 / MB4) (Thermoanaerobacter tengcongensis).